The following is a 756-amino-acid chain: Deoxynucleotidyltransferase terminal-interacting protein 2 (756 aa).

Residues 1–99 (MVVTRSARAK…AESNYSVSEH (99 aa)) form a disordered region. Residues 9–21 (AKASIQAASAESS) show a composition bias toward low complexity. Ser21 carries the phosphoserine modification. Composition is skewed to polar residues over residues 35–55 (PESSTGSDARTTAESQTTGKQ) and 80–96 (EPSTDGETSEAESNYSV). Residue Ser117 is modified to Phosphoserine. Phosphothreonine is present on Thr129. Phosphoserine occurs at positions 141, 145, 148, 184, and 194. Residues 156–261 (PTEKTTGARR…LSEINKPNFY (106 aa)) form a disordered region. Residues 201 to 211 (RRTRSMQRKLK) show a composition bias toward basic residues. Residues Lys217 and Lys220 each participate in a glycyl lysine isopeptide (Lys-Gly) (interchain with G-Cter in SUMO2) cross-link. Phosphothreonine is present on Thr232. Phosphoserine occurs at positions 239, 251, and 253. A compositionally biased stretch (polar residues) spans 242 to 256 (RQTSHLQARSLSEIN). Residues Lys257, Lys316, and Lys321 each participate in a glycyl lysine isopeptide (Lys-Gly) (interchain with G-Cter in SUMO2) cross-link. 2 positions are modified to phosphoserine: Ser324 and Ser330. Lys345 is covalently cross-linked (Glycyl lysine isopeptide (Lys-Gly) (interchain with G-Cter in SUMO2)). Phosphoserine is present on Ser381. Lys384 participates in a covalent cross-link: Glycyl lysine isopeptide (Lys-Gly) (interchain with G-Cter in SUMO2). Phosphoserine is present on residues Ser434 and Ser512. The stretch at 505–542 (LEEEDKASEVAIEEEKEEEEDEKSEEDSSDHDENEDEF) forms a coiled coil. Residues 510–547 (KASEVAIEEEKEEEEDEKSEEDSSDHDENEDEFSDEED) form a disordered region. The tdBR region; mediates interaction with DNTT stretch occupies residues 548–605 (FLNSTKAKLLKLTSSSIDPGLSIKQLGGLYINFNADKLQSNKRTLTQIKEKKKNELLQ). Lys558 participates in a covalent cross-link: Glycyl lysine isopeptide (Lys-Gly) (interchain with G-Cter in SUMO2). At Ser569 the chain carries Phosphoserine. Residues Lys584 and Lys606 each participate in a glycyl lysine isopeptide (Lys-Gly) (interchain with G-Cter in SUMO2) cross-link. Residue Thr610 is modified to Phosphothreonine. Residues Lys626, Lys649, Lys658, Lys686, and Lys731 each participate in a glycyl lysine isopeptide (Lys-Gly) (interchain with G-Cter in SUMO2) cross-link.

Forms a ternary complex with DNTT and core histone; interaction with PCNA releases DNTT and H2A/H2B histones from this ternary complex. Interacts with ESR1, ESR2, PPARG and RXRA. Part of the small subunit (SSU) processome, composed of more than 70 proteins and the RNA chaperone small nucleolar RNA (snoRNA) U3. In terms of tissue distribution, widely expressed with higher levels in testis.

The protein localises to the nucleus. It localises to the nucleolus. Functionally, regulates the transcriptional activity of DNTT and ESR1. May function as a chromatin remodeling protein. Part of the small subunit (SSU) processome, first precursor of the small eukaryotic ribosomal subunit. During the assembly of the SSU processome in the nucleolus, many ribosome biogenesis factors, an RNA chaperone and ribosomal proteins associate with the nascent pre-rRNA and work in concert to generate RNA folding, modifications, rearrangements and cleavage as well as targeted degradation of pre-ribosomal RNA by the RNA exosome. The sequence is that of Deoxynucleotidyltransferase terminal-interacting protein 2 from Homo sapiens (Human).